The sequence spans 415 residues: Pectin acetylesterase 12 (415 aa).

A signal peptide spans methionine 1 to alanine 20. Asparagine 27 is a glycosylation site (N-linked (GlcNAc...) asparagine). Active-site charge relay system residues include serine 197, aspartate 293, and histidine 360.

Belongs to the pectinacetylesterase family.

The protein resides in the secreted. Its subcellular location is the cell wall. Its function is as follows. Hydrolyzes acetyl esters in homogalacturonan regions of pectin. In type I primary cell wall, galacturonic acid residues of pectin can be acetylated at the O-2 and O-3 positions. Decreasing the degree of acetylation of pectin gels in vitro alters their physical properties. The chain is Pectin acetylesterase 12 from Arabidopsis thaliana (Mouse-ear cress).